The sequence spans 147 residues: UPF0735 ACT domain-containing protein RBAM_024960 (147 aa).

The ACT domain occupies 70-145 (TLFFHLEDRS…FIEKVEILGS (76 aa)).

It belongs to the UPF0735 family.

In Bacillus velezensis (strain DSM 23117 / BGSC 10A6 / LMG 26770 / FZB42) (Bacillus amyloliquefaciens subsp. plantarum), this protein is UPF0735 ACT domain-containing protein RBAM_024960.